The sequence spans 377 residues: Cytochrome b (377 aa).

4 consecutive transmembrane segments (helical) span residues 36 to 56, 80 to 102, 115 to 135, and 181 to 201; these read WGSL…FLAM, WLIR…LHMA, VWLI…MGYI, and FFVL…IHLI. The heme b site is built by His-86 and His-100. His-185 and His-199 together coordinate heme b. His-204 serves as a coordination point for a ubiquinone. 4 helical membrane-spanning segments follow: residues 227 to 247, 291 to 311, 326 to 346, and 354 to 374; these read YSSK…VIIF, LGGV…PFIS, LFWS…MPVV, and LTST…FLMI.

Belongs to the cytochrome b family. As to quaternary structure, the main subunits of complex b-c1 are: cytochrome b, cytochrome c1 and the Rieske protein. Heme b serves as cofactor.

The protein localises to the mitochondrion inner membrane. Functionally, component of the ubiquinol-cytochrome c reductase complex (complex III or cytochrome b-c1 complex) that is part of the mitochondrial respiratory chain. The b-c1 complex mediates electron transfer from ubiquinol to cytochrome c. Contributes to the generation of a proton gradient across the mitochondrial membrane that is then used for ATP synthesis. The chain is Cytochrome b (mt:Cyt-b) from Myzostoma seymourcollegiorum (Polychaete worm).